The sequence spans 136 residues: Large ribosomal subunit protein uL16 (136 aa).

Belongs to the universal ribosomal protein uL16 family. In terms of assembly, part of the 50S ribosomal subunit.

In terms of biological role, binds 23S rRNA and is also seen to make contacts with the A and possibly P site tRNAs. The polypeptide is Large ribosomal subunit protein uL16 (Vibrio vulnificus (strain YJ016)).